The chain runs to 589 residues: Phenylalanine--tRNA ligase beta subunit (589 aa).

The B5 domain occupies 302 to 377; the sequence is LEVREERISV…IAYGYNNIKK (76 aa). Residues aspartate 355, aspartate 361, glutamate 364, and aspartate 365 each contribute to the Mg(2+) site.

This sequence belongs to the phenylalanyl-tRNA synthetase beta subunit family. Type 2 subfamily. As to quaternary structure, tetramer of two alpha and two beta subunits. Requires Mg(2+) as cofactor.

Its subcellular location is the cytoplasm. The enzyme catalyses tRNA(Phe) + L-phenylalanine + ATP = L-phenylalanyl-tRNA(Phe) + AMP + diphosphate + H(+). The sequence is that of Phenylalanine--tRNA ligase beta subunit from Drosophila melanogaster (Fruit fly).